We begin with the raw amino-acid sequence, 286 residues long: Putative thiosulfate sulfurtransferase (286 aa).

Residues 27–134 (DDPAYRLVEV…WVDNDYPTTD (108 aa)) form the Rhodanese 1 domain. Glycyl lysine isopeptide (Lys-Gly) (interchain with G-Cter in SAMP2) cross-links involve residues Lys162 and Lys166. Residues 164–283 (VDKGLPLVDV…WGNLVGAPVE (120 aa)) enclose the Rhodanese 2 domain. Cys242 (cysteine persulfide intermediate) is an active-site residue. Arg247 contacts substrate.

It carries out the reaction thiosulfate + hydrogen cyanide = thiocyanate + sulfite + 2 H(+). Its function is as follows. May be a sulfotransferase involved in the formation of thiosulfate. This chain is Putative thiosulfate sulfurtransferase (tssA), found in Haloferax volcanii (strain ATCC 29605 / DSM 3757 / JCM 8879 / NBRC 14742 / NCIMB 2012 / VKM B-1768 / DS2) (Halobacterium volcanii).